A 207-amino-acid polypeptide reads, in one-letter code: MNRPQGEPAKALRLPAALLYAEPLPEDLVEVGYVGAAYGIRGWIKVQPHADDASALLHARRWWLLSPPQAGLVAADAARSQPVCVKIAQSREHSGTVVAQAAGVADRNLAEALRGRRVWIRRADFPAPDEDEFYWVDLIGCNVSNEQGELLGEVSGLIDNGAHQILQVAFVQPDGKAGERLIPFVDAFLREVDTAGKRIVVDWGLDY.

The PRC barrel domain occupies 130-207; sequence EDEFYWVDLI…RIVVDWGLDY (78 aa).

It belongs to the RimM family. Binds ribosomal protein uS19.

It localises to the cytoplasm. Its function is as follows. An accessory protein needed during the final step in the assembly of 30S ribosomal subunit, possibly for assembly of the head region. Essential for efficient processing of 16S rRNA. May be needed both before and after RbfA during the maturation of 16S rRNA. It has affinity for free ribosomal 30S subunits but not for 70S ribosomes. This Cupriavidus taiwanensis (strain DSM 17343 / BCRC 17206 / CCUG 44338 / CIP 107171 / LMG 19424 / R1) (Ralstonia taiwanensis (strain LMG 19424)) protein is Ribosome maturation factor RimM.